The following is a 287-amino-acid chain: Polyamine aminopropyltransferase (287 aa).

Residues 9–242 form the PABS domain; the sequence is GSWLDEYQND…GIWSWTFASI (234 aa). Residue Gln-36 coordinates S-methyl-5'-thioadenosine. Spermidine-binding residues include His-67 and Asp-91. S-methyl-5'-thioadenosine contacts are provided by residues Glu-111 and 143–144; that span reads NG. The active-site Proton acceptor is Asp-162. Pro-169 serves as a coordination point for S-methyl-5'-thioadenosine.

The protein belongs to the spermidine/spermine synthase family. Homodimer or homotetramer.

It is found in the cytoplasm. It carries out the reaction S-adenosyl 3-(methylsulfanyl)propylamine + putrescine = S-methyl-5'-thioadenosine + spermidine + H(+). It functions in the pathway amine and polyamine biosynthesis; spermidine biosynthesis; spermidine from putrescine: step 1/1. Its function is as follows. Catalyzes the irreversible transfer of a propylamine group from the amino donor S-adenosylmethioninamine (decarboxy-AdoMet) to putrescine (1,4-diaminobutane) to yield spermidine. This chain is Polyamine aminopropyltransferase, found in Prochlorococcus marinus (strain SARG / CCMP1375 / SS120).